Consider the following 211-residue polypeptide: tRNA (guanine-N(7)-)-methyltransferase (211 aa).

Residues E44, D69, D96, and D118 each contribute to the S-adenosyl-L-methionine site. Residue D118 is part of the active site. Substrate is bound at residue K122. The tract at residues 124–129 (KHEKRR) is interaction with RNA. Residues D154 and 191-194 (TEYE) contribute to the substrate site.

Belongs to the class I-like SAM-binding methyltransferase superfamily. TrmB family.

The catalysed reaction is guanosine(46) in tRNA + S-adenosyl-L-methionine = N(7)-methylguanosine(46) in tRNA + S-adenosyl-L-homocysteine. Its pathway is tRNA modification; N(7)-methylguanine-tRNA biosynthesis. Catalyzes the formation of N(7)-methylguanine at position 46 (m7G46) in tRNA. This Streptococcus pyogenes serotype M12 (strain MGAS2096) protein is tRNA (guanine-N(7)-)-methyltransferase.